Reading from the N-terminus, the 350-residue chain is Probable choline kinase 2 (350 aa).

ATP is bound by residues Arg-73, Gln-210, and Asp-227.

Belongs to the choline/ethanolamine kinase family.

The enzyme catalyses choline + ATP = phosphocholine + ADP + H(+). Its pathway is phospholipid metabolism; phosphatidylcholine biosynthesis; phosphocholine from choline: step 1/1. In terms of biological role, involved in phospholipid biosynthesis. Catalyzes the first step in phosphatidylcholine biosynthesis. The protein is Probable choline kinase 2 of Arabidopsis thaliana (Mouse-ear cress).